Here is a 513-residue protein sequence, read N- to C-terminus: ATP synthase subunit alpha (513 aa).

An ATP-binding site is contributed by 169-176 (GDRQTGKS).

It belongs to the ATPase alpha/beta chains family. As to quaternary structure, F-type ATPases have 2 components, CF(1) - the catalytic core - and CF(0) - the membrane proton channel. CF(1) has five subunits: alpha(3), beta(3), gamma(1), delta(1), epsilon(1). CF(0) has three main subunits: a(1), b(2) and c(9-12). The alpha and beta chains form an alternating ring which encloses part of the gamma chain. CF(1) is attached to CF(0) by a central stalk formed by the gamma and epsilon chains, while a peripheral stalk is formed by the delta and b chains.

The protein localises to the cell inner membrane. The catalysed reaction is ATP + H2O + 4 H(+)(in) = ADP + phosphate + 5 H(+)(out). Produces ATP from ADP in the presence of a proton gradient across the membrane. The alpha chain is a regulatory subunit. In Blochmanniella floridana, this protein is ATP synthase subunit alpha.